A 380-amino-acid chain; its full sequence is Tryptophan 2,3-dioxygenase (380 aa).

Residues 57-61 (FIITH) and Arg128 contribute to the substrate site. His313 serves as a coordination point for heme. Thr328 provides a ligand contact to substrate.

It belongs to the tryptophan 2,3-dioxygenase family. As to quaternary structure, homotetramer. Dimer of dimers. Requires heme as cofactor.

The enzyme catalyses L-tryptophan + O2 = N-formyl-L-kynurenine. The protein operates within amino-acid degradation; L-tryptophan degradation via kynurenine pathway; L-kynurenine from L-tryptophan: step 1/2. It functions in the pathway pigment biosynthesis; ommochrome biosynthesis. Its function is as follows. Heme-dependent dioxygenase that catalyzes the oxidative cleavage of the L-tryptophan (L-Trp) pyrrole ring and converts L-tryptophan to N-formyl-L-kynurenine. Catalyzes the oxidative cleavage of the indole moiety. The polypeptide is Tryptophan 2,3-dioxygenase (Drosophila mojavensis (Fruit fly)).